Reading from the N-terminus, the 88-residue chain is Small ribosomal subunit protein uS15c (88 aa).

Belongs to the universal ribosomal protein uS15 family. As to quaternary structure, part of the 30S ribosomal subunit.

It localises to the plastid. It is found in the chloroplast. This is Small ribosomal subunit protein uS15c (rps15) from Arabis hirsuta (Hairy rock-cress).